A 661-amino-acid polypeptide reads, in one-letter code: Transketolase (661 aa).

Serine 2 is subject to N-acetylserine. Histidine 31 provides a ligand contact to substrate. Residues histidine 71 and 119 to 121 (GPL) each bind thiamine diphosphate. Aspartate 160 contacts Mg(2+). The thiamine diphosphate site is built by glycine 161 and asparagine 190. Positions 190 and 192 each coordinate Mg(2+). Positions 267, 359, and 386 each coordinate substrate. A thiamine diphosphate-binding site is contributed by histidine 267. The active-site Proton donor is the glutamate 413. Thiamine diphosphate is bound at residue phenylalanine 439. Residues histidine 463, aspartate 471, and arginine 522 each coordinate substrate.

Belongs to the transketolase family. In terms of assembly, homodimer. The cofactor is Mg(2+). Ca(2+) serves as cofactor. Mn(2+) is required as a cofactor. Requires Co(2+) as cofactor. It depends on thiamine diphosphate as a cofactor.

The catalysed reaction is D-sedoheptulose 7-phosphate + D-glyceraldehyde 3-phosphate = aldehydo-D-ribose 5-phosphate + D-xylulose 5-phosphate. Catalyzes the transfer of a two-carbon ketol group from a ketose donor to an aldose acceptor, via a covalent intermediate with the cofactor thiamine pyrophosphate. In Dictyostelium discoideum (Social amoeba), this protein is Transketolase (tkt-1).